A 402-amino-acid chain; its full sequence is DNA primase DnaG (402 aa).

The region spanning 165-243 is the Toprim domain; sequence PNLIIVEGRA…KIDFVARAPV (79 aa). Mg(2+)-binding residues include E171, D216, and D218.

It belongs to the archaeal DnaG primase family. Forms a ternary complex with MCM helicase and DNA. Component of the archaeal exosome complex. Mg(2+) serves as cofactor.

The enzyme catalyses ssDNA + n NTP = ssDNA/pppN(pN)n-1 hybrid + (n-1) diphosphate.. Its function is as follows. RNA polymerase that catalyzes the synthesis of short RNA molecules used as primers for DNA polymerase during DNA replication. Also part of the exosome, which is a complex involved in RNA degradation. Acts as a poly(A)-binding protein that enhances the interaction between heteromeric, adenine-rich transcripts and the exosome. This is DNA primase DnaG from Saccharolobus islandicus (strain Y.N.15.51 / Yellowstone #2) (Sulfolobus islandicus).